The following is a 393-amino-acid chain: Cyclin CCL1 (393 aa).

Polar residues predominate over residues 1–19; it reads MTDIQLNGKSTLDTPSATM. Disordered stretches follow at residues 1 to 45 and 289 to 325; these read MTDI…RISD and SREG…SEEY. Basic and acidic residues-rich tracts occupy residues 21-35 and 300-321; these read AKEK…DENN and NEKE…KSTE.

It belongs to the cyclin family. Cyclin C subfamily. CCL1 and KIN28 form the TFIIK complex, a component of TFIIH holo complex. Component of a complex consisting of KIN28, CCL1 and TFB3.

Regulatory component of the TFIIK complex (KIN28-CCL1 dimer) which is the protein kinase component of transcription factor IIH (TFIIH) and phosphorylates the C-terminal domain of RNA polymerase II during transition from transcription to elongation after preinitiation complex (PIC) formation, thereby positively regulating transcription. TFIIH (or factor B) is essential for both basal and activated transcription, and is involved in nucleotide excision repair (NER) of damaged DNA. TFIIH has DNA-dependent ATPase activity and is essential for polymerase II transcription in vitro. This Saccharomyces cerevisiae (strain ATCC 204508 / S288c) (Baker's yeast) protein is Cyclin CCL1 (CCL1).